The sequence spans 386 residues: Histone-lysine N-methyltransferase SETD7 (386 aa).

Residues 1–12 (MDSSDDEIACDE) show a composition bias toward acidic residues. The tract at residues 1–21 (MDSSDDEIACDEGDYKGAKDD) is disordered. 4 MORN repeats span residues 15–38 (YKGA…SGDE), 39–61 (FIGA…DDST), 62–84 (LEGN…DGSI), and 109–131 (FRGQ…DGGS). In terms of domain architecture, SET spans 222–344 (ELVYAAPSKI…EGDELTVHYT (123 aa)). S-adenosyl-L-methionine contacts are provided by residues 234–236 (AGE), Asn304, and His305.

It belongs to the class V-like SAM-binding methyltransferase superfamily. Histone-lysine methyltransferase family. SET7 subfamily.

The protein localises to the nucleus. It is found in the chromosome. It catalyses the reaction L-lysyl(4)-[histone H3] + S-adenosyl-L-methionine = N(6)-methyl-L-lysyl(4)-[histone H3] + S-adenosyl-L-homocysteine + H(+). The enzyme catalyses L-lysyl-[protein] + S-adenosyl-L-methionine = N(6)-methyl-L-lysyl-[protein] + S-adenosyl-L-homocysteine + H(+). Functionally, histone methyltransferase that specifically monomethylates 'Lys-4' of histone H3. H3 'Lys-4' methylation represents a specific tag for epigenetic transcriptional activation. Plays a central role in the transcriptional activation of genes. Also has methyltransferase activity toward non-histone proteins. In Halocynthia roretzi (Sea squirt), this protein is Histone-lysine N-methyltransferase SETD7 (setd7).